The following is a 1769-amino-acid chain: U3 small nucleolar RNA-associated protein 10 (1769 aa).

S2 carries the post-translational modification N-acetylserine. The HEAT repeat unit spans residues 1729–1767 (LVPVIAELLEDDDEEIEREVRTGLVKVVENVLGEPFDRY).

Belongs to the HEATR1/UTP10 family. In terms of assembly, interacts with snoRNA U3. Interacts with MPP10. Component of the ribosomal small subunit (SSU) processome composed of at least 40 protein subunits and snoRNA U3. In the absence of snoRNA3, forms a complex with other t-UTPs. This complex can associate with pre-18S ribosomal RNAs.

It is found in the nucleus. The protein localises to the nucleolus. Its subcellular location is the mitochondrion. Involved in nucleolar processing of pre-18S ribosomal RNA. Required for optimal pre-ribosomal RNA transcription by RNA polymerase I together with a subset of U3 proteins required for transcription (t-UTPs). Involved in ribosome biosynthesis. The protein is U3 small nucleolar RNA-associated protein 10 (UTP10) of Saccharomyces cerevisiae (strain ATCC 204508 / S288c) (Baker's yeast).